The chain runs to 388 residues: uncharacterized protein (388 aa).

The protein resides in the mitochondrion. This is an uncharacterized protein from Dictyostelium citrinum (Slime mold).